The chain runs to 318 residues: Probable cell division protein WhiA (318 aa).

A DNA-binding region (H-T-H motif) is located at residues 276–310 (TLQELGEMVESGSISKSGINHRLRKIDQIADKIRN).

It belongs to the WhiA family.

In terms of biological role, involved in cell division and chromosome segregation. In Exiguobacterium sibiricum (strain DSM 17290 / CCUG 55495 / CIP 109462 / JCM 13490 / 255-15), this protein is Probable cell division protein WhiA.